Here is a 729-residue protein sequence, read N- to C-terminus: E3 ubiquitin-protein ligase Trim36 (729 aa).

The RING-type; degenerate zinc-finger motif lies at 33-84 (CPACKELFTHPLILPCQHSVCHKCVKELLLSLDDSFNDVASDSSNQSSPRLR). 2 consecutive B box-type zinc fingers follow at residues 154 to 192 (AIMCDLCKPPPQESTKSCMDCSASYCNECFKIYHPWGTV) and 207 to 249 (PKVL…VTTM). Residues Cys212, His215, Cys235, and His241 each contribute to the Zn(2+) site. Residues 271–302 (ESQVKSQISELNLLMKETECNGERAKEEALAH) adopt a coiled-coil conformation. One can recognise a COS domain in the interval 356 to 413 (LKETDQSCFVQTAKQLHLRIQKATESLKSFRPAAQASFEDYVVNISKQTEVLGELSFF). One can recognise a Fibronectin type-III domain in the interval 416–511 (GIDIPEINEE…RELILHTPPA (96 aa)). In terms of domain architecture, B30.2/SPRY spans 509–723 (PPAPVFSFLF…LEEAITAKYL (215 aa)). The interval 606-626 (RDAASPRYEQDSGHDSGSEDA) is disordered. Over residues 613–622 (YEQDSGHDSG) the composition is skewed to basic and acidic residues.

Belongs to the TRIM/RBCC family. In terms of assembly, interacts with CENPH. As to expression, expressed in testis. Strongly expressed in the neural tube region in 14.5 dpc embryos.

The protein resides in the cytoplasm. It localises to the cytoplasmic vesicle. Its subcellular location is the secretory vesicle. The protein localises to the acrosome. It is found in the cytoskeleton. The enzyme catalyses S-ubiquitinyl-[E2 ubiquitin-conjugating enzyme]-L-cysteine + [acceptor protein]-L-lysine = [E2 ubiquitin-conjugating enzyme]-L-cysteine + N(6)-ubiquitinyl-[acceptor protein]-L-lysine.. In terms of biological role, E3 ubiquitin-protein ligase which mediates ubiquitination and subsequent proteasomal degradation of target proteins. Involved in chromosome segregation and cell cycle regulation. May play a role in the acrosome reaction and fertilization. In Mus musculus (Mouse), this protein is E3 ubiquitin-protein ligase Trim36 (Trim36).